Reading from the N-terminus, the 127-residue chain is Cyclin-dependent kinase 2-associated protein 2 (127 aa).

Residues M1 to P47 are disordered. Residues A9 to P44 are compositionally biased toward low complexity. Residues P65–I107 form an interaction with CDK2 region.

Belongs to the CDK2AP family. As to quaternary structure, component of the nucleosome remodeling and deacetylase (NuRD) repressor complex, composed of core proteins MTA1, MTA2, MTA3, RBBP4, RBBP7, HDAC1, HDAC2, MBD2, MBD3, and peripherally associated proteins CDK2AP1, CDK2AP2, GATAD2A, GATAD2B, CHD3, CHD4 and CHD5. The exact stoichiometry of the NuRD complex is unknown, and some subunits such as MBD2 and MBD3, GATAD2A and GATAD2B, and CHD3, CHD4 and CHD5 define mutually exclusive NuRD complexes. Interacts with CDK2AP1. Interacts with CDK2. Interacts with MAPK1. Phosphorylated by MAPK1 and CDK2. Oocytes (at protein level).

The protein resides in the cytoplasm. It localises to the nucleus. Acts as a component of the histone deacetylase NuRD complex which participates in the remodeling of chromatin. Inhibits cell cycle G1/S phase transition by repressing CDK2 expression and activation; represses CDK2 activation by inhibiting its interaction with cyclin E and A. Plays a role in regulating the self-renewal of embryonic stem cells (ESCs) and in maintaining cell survival during terminal differentiation of ESCs. Regulates microtubule organization of metaphase II oocytes. In Mus musculus (Mouse), this protein is Cyclin-dependent kinase 2-associated protein 2 (Cdk2ap2).